A 70-amino-acid chain; its full sequence is Insulin (70 aa).

Disulfide bonds link Cys7–Cys56, Cys19–Cys69, and Cys55–Cys60. Positions 33 to 49 (FVDSLAGYSKHQNGGIS) are cleaved as a propeptide — c peptide.

This sequence belongs to the insulin family. In terms of assembly, heterodimer of a B chain and an A chain linked by two disulfide bonds.

The protein localises to the secreted. Its function is as follows. Insulin decreases blood glucose concentration. It increases cell permeability to monosaccharides, amino acids and fatty acids. It accelerates glycolysis, the pentose phosphate cycle, and glycogen synthesis in liver. The sequence is that of Insulin (ins) from Torpedo marmorata (Marbled electric ray).